The chain runs to 274 residues: 2,3,4,5-tetrahydropyridine-2,6-dicarboxylate N-succinyltransferase (274 aa).

The substrate site is built by Arg104 and Asp141.

The protein belongs to the transferase hexapeptide repeat family. As to quaternary structure, homotrimer.

It localises to the cytoplasm. It carries out the reaction (S)-2,3,4,5-tetrahydrodipicolinate + succinyl-CoA + H2O = (S)-2-succinylamino-6-oxoheptanedioate + CoA. It participates in amino-acid biosynthesis; L-lysine biosynthesis via DAP pathway; LL-2,6-diaminopimelate from (S)-tetrahydrodipicolinate (succinylase route): step 1/3. The sequence is that of 2,3,4,5-tetrahydropyridine-2,6-dicarboxylate N-succinyltransferase from Shewanella loihica (strain ATCC BAA-1088 / PV-4).